The sequence spans 452 residues: Glycylpeptide N-tetradecanoyltransferase (452 aa).

Tetradecanoyl-CoA-binding positions include 38–41 (YKFW), 171–173 (LCI), and 179–183 (SKRLA). The active-site Proton acceptor; via carboxylate is the Leu452.

The protein belongs to the NMT family. Monomer.

The protein resides in the cytoplasm. The enzyme catalyses N-terminal glycyl-[protein] + tetradecanoyl-CoA = N-tetradecanoylglycyl-[protein] + CoA + H(+). Adds a myristoyl group to the N-terminal glycine residue of certain cellular proteins. This Eremothecium gossypii (strain ATCC 10895 / CBS 109.51 / FGSC 9923 / NRRL Y-1056) (Yeast) protein is Glycylpeptide N-tetradecanoyltransferase (NMT1).